Reading from the N-terminus, the 415-residue chain is MELRVGNRYRLGRKIGSGSFGDIYLGTDIAAGEEVAIKLECVKTKHPQLHIESKIYKMMQGGVGIPTIRWCGAEGDYNVMVMELLGPSLEDLFNFCSRKFSLKTVLLLADQMISRIEYIHSKNFIHRDVKPDNFLMGLGKKGNLVYIIDFGLAKKYRDARTHQHIPYRENKNLTGTARYASINTHLGIEQSRRDDLESLGYVLMYFNLGSLPWQGLKAATKRQKYERISEKKMSTPIEVLCKGYPSEFATYLNFCRSLRFDDKPDYSYLRQLFRNLFHRQGFSYDYVFDWNMLKFGASRAADDAERERRDREERLRHSRNPATRGLPSTASGRLRGTQEVAPPTPLTPTSHTANTSPRPVSGMERERKVSMRLHRGAPVNISSSDLTGRQDTSRMSTSQIPGRVASSGLQSVVHR.

A Protein kinase domain is found at 9-277 (YRLGRKIGSG…YLRQLFRNLF (269 aa)). Residues 15–23 (IGSGSFGDI) and Lys-38 each bind ATP. Asp-128 serves as the catalytic Proton acceptor. The segment at 278-364 (HRQGFSYDYV…TSPRPVSGME (87 aa)) is centrosomal localization signal (CLS). The segment covering 301–315 (ADDAERERRDREERL) has biased composition (basic and acidic residues). The tract at residues 301 to 415 (ADDAERERRD…SSGLQSVVHR (115 aa)) is disordered. Positions 317–342 (HSRNPATRGLPSTASGRLRGTQEVAP) are autoinhibitory. A phosphoserine mark is found at Ser-328 and Ser-331. Residues 347-358 (TPTSHTANTSPR) are compositionally biased toward polar residues. Ser-370 bears the Phosphoserine mark. Omega-N-methylarginine is present on Arg-375. Over residues 380 to 400 (NISSSDLTGRQDTSRMSTSQI) the composition is skewed to polar residues. A phosphoserine mark is found at Ser-382, Ser-383, Ser-384, Ser-407, and Ser-411.

This sequence belongs to the protein kinase superfamily. CK1 Ser/Thr protein kinase family. Casein kinase I subfamily. In terms of assembly, monomer. Component of the circadian core oscillator, which includes the CRY proteins, CLOCK, or NPAS2, ARTNL/BMAL1 or ARTNL2/BMAL2, CSNK1D and/or CSNK1E, TIMELESS and the PER proteins. Interacts with DNMT1 and MAP1A. Interacts directly with PER1 and PER2 which may lead to their degradation. Interacts with MAPT/TAU, SNAPIN, DBNDD2, AIB1/NCOA3 and ESR1. Interacts with AKAP9/AKAP450; this interaction promotes centrosomal subcellular location. Binds to tubulins in mitotic cells upon DNA damage. Interacts with GJA1. Interacts with DDX3X; this interaction enhances CSNK1D kinase activity in vitro, but it is unclear whether this interaction is physiologically relevant. Interacts with FAM83A, FAM83B, FAM83E and FAM83H (via DUF1669). Post-translationally, autophosphorylated on serine and threonine residues; this autophosphorylation represses activity. Reactivated by phosphatase-mediated dephosphorylation. May be dephosphorylated by PP1.

The protein localises to the cytoplasm. Its subcellular location is the nucleus. It localises to the cytoskeleton. The protein resides in the microtubule organizing center. It is found in the centrosome. The protein localises to the perinuclear region. Its subcellular location is the cell membrane. It localises to the spindle. The protein resides in the golgi apparatus. The catalysed reaction is L-seryl-[protein] + ATP = O-phospho-L-seryl-[protein] + ADP + H(+). The enzyme catalyses L-threonyl-[protein] + ATP = O-phospho-L-threonyl-[protein] + ADP + H(+). It carries out the reaction L-seryl-[tau protein] + ATP = O-phospho-L-seryl-[tau protein] + ADP + H(+). It catalyses the reaction L-threonyl-[tau protein] + ATP = O-phospho-L-threonyl-[tau protein] + ADP + H(+). With respect to regulation, drug-mediated inhibition leads to a delay of the oscillations with the magnitude of this effect dependent upon the timing of drug administration. Inhibited by phosphorylation. Exhibits substrate-dependent heparin activation. Functionally, essential serine/threonine-protein kinase that regulates diverse cellular growth and survival processes including Wnt signaling, DNA repair and circadian rhythms. It can phosphorylate a large number of proteins. Casein kinases are operationally defined by their preferential utilization of acidic proteins such as caseins as substrates. Phosphorylates connexin-43/GJA1, MAP1A, SNAPIN, MAPT/TAU, TOP2A, DCK, HIF1A, EIF6, p53/TP53, DVL2, DVL3, ESR1, AIB1/NCOA3, DNMT1, PKD2, YAP1, PER1 and PER2. Central component of the circadian clock. In balance with PP1, determines the circadian period length through the regulation of the speed and rhythmicity of PER1 and PER2 phosphorylation. Controls PER1 and PER2 nuclear transport and degradation. YAP1 phosphorylation promotes its SCF(beta-TRCP) E3 ubiquitin ligase-mediated ubiquitination and subsequent degradation. DNMT1 phosphorylation reduces its DNA-binding activity. Phosphorylation of ESR1 and AIB1/NCOA3 stimulates their activity and coactivation. Phosphorylation of DVL2 and DVL3 regulates WNT3A signaling pathway that controls neurite outgrowth. Phosphorylates NEDD9/HEF1. EIF6 phosphorylation promotes its nuclear export. Triggers down-regulation of dopamine receptors in the forebrain. Activates DCK in vitro by phosphorylation. TOP2A phosphorylation favors DNA cleavable complex formation. May regulate the formation of the mitotic spindle apparatus in extravillous trophoblast. Modulates connexin-43/GJA1 gap junction assembly by phosphorylation. Probably involved in lymphocyte physiology. Regulates fast synaptic transmission mediated by glutamate. The polypeptide is Casein kinase I isoform delta (CSNK1D) (Bos taurus (Bovine)).